The primary structure comprises 430 residues: Adenylosuccinate synthetase (430 aa).

Residues 13–19 (GDEGKGK) and 41–43 (GHT) contribute to the GTP site. The active-site Proton acceptor is Asp14. 2 residues coordinate Mg(2+): Asp14 and Gly41. IMP-binding positions include 14–17 (DEGK), 39–42 (NAGH), Thr130, Arg144, Gln225, Thr240, and Arg304. Catalysis depends on His42, which acts as the Proton donor. Position 300 to 306 (300 to 306 (ATTGRKR)) interacts with substrate. GTP contacts are provided by residues Arg306, 332–334 (KLD), and 414–416 (STG).

The protein belongs to the adenylosuccinate synthetase family. Homodimer. It depends on Mg(2+) as a cofactor.

The protein localises to the cytoplasm. It catalyses the reaction IMP + L-aspartate + GTP = N(6)-(1,2-dicarboxyethyl)-AMP + GDP + phosphate + 2 H(+). The protein operates within purine metabolism; AMP biosynthesis via de novo pathway; AMP from IMP: step 1/2. Functionally, plays an important role in the de novo pathway of purine nucleotide biosynthesis. Catalyzes the first committed step in the biosynthesis of AMP from IMP. This is Adenylosuccinate synthetase from Teredinibacter turnerae (strain ATCC 39867 / T7901).